A 486-amino-acid chain; its full sequence is Ribosome biogenesis protein YTM1 (486 aa).

The tract at residues 12 to 99 (RQLPINLFTR…ESQIDVEYVR (88 aa)) is ubiquitin-like (UBL) domain. WD repeat units lie at residues 212–251 (GHTG…PTEH), 305–345 (GHTG…AGAL), 349–388 (PFDK…SLIS), 392–432 (PTTS…TALF), and 454–486 (VLGE…ARGE). The interval 249–299 (TEHQVPADPVSYLPGQGTKKRRKLEKDQEKAPIEGLTDGDATGEGGWRRAP) is disordered.

This sequence belongs to the WD repeat WDR12/YTM1 family. In terms of assembly, component of the NOP7 complex, composed of ERB1, NOP7 and YTM1. The complex is held together by ERB1, which interacts with NOP7 via its N-terminal domain and with YTM1 via a high-affinity interaction between the seven-bladed beta-propeller domains of the 2 proteins. The NOP7 complex associates with the 66S pre-ribosome. Interacts (via UBL domain) with MDN1 (via VWFA/MIDAS domain).

It is found in the nucleus. Its subcellular location is the nucleolus. The protein resides in the nucleoplasm. Component of the NOP7 complex, which is required for maturation of the 25S and 5.8S ribosomal RNAs and formation of the 60S ribosome. This is Ribosome biogenesis protein YTM1 from Cryptococcus neoformans var. neoformans serotype D (strain B-3501A) (Filobasidiella neoformans).